A 172-amino-acid chain; its full sequence is ATP synthase subunit b (172 aa).

A helical transmembrane segment spans residues 12–32 (VGFNAGTMLFQLVAMLILLAL).

Belongs to the ATPase B chain family. As to quaternary structure, F-type ATPases have 2 components, F(1) - the catalytic core - and F(0) - the membrane proton channel. F(1) has five subunits: alpha(3), beta(3), gamma(1), delta(1), epsilon(1). F(0) has three main subunits: a(1), b(2) and c(10-14). The alpha and beta chains form an alternating ring which encloses part of the gamma chain. F(1) is attached to F(0) by a central stalk formed by the gamma and epsilon chains, while a peripheral stalk is formed by the delta and b chains.

Its subcellular location is the cell membrane. In terms of biological role, f(1)F(0) ATP synthase produces ATP from ADP in the presence of a proton or sodium gradient. F-type ATPases consist of two structural domains, F(1) containing the extramembraneous catalytic core and F(0) containing the membrane proton channel, linked together by a central stalk and a peripheral stalk. During catalysis, ATP synthesis in the catalytic domain of F(1) is coupled via a rotary mechanism of the central stalk subunits to proton translocation. Functionally, component of the F(0) channel, it forms part of the peripheral stalk, linking F(1) to F(0). The sequence is that of ATP synthase subunit b from Bacillus licheniformis (strain ATCC 14580 / DSM 13 / JCM 2505 / CCUG 7422 / NBRC 12200 / NCIMB 9375 / NCTC 10341 / NRRL NRS-1264 / Gibson 46).